The sequence spans 1230 residues: Serine/threonine-protein kinase PDK1 (1230 aa).

The segment at 1–277 (MASSHFGPAS…ASSGALKKHS (277 aa)) is disordered. A compositionally biased stretch (low complexity) spans 34 to 50 (SSSSSSRSTTTCSSTSS). Residues 62-76 (ETSTAATSRSQLPSN) are compositionally biased toward polar residues. Basic and acidic residues predominate over residues 77–87 (RHSENEAEHDT). Composition is skewed to polar residues over residues 107–117 (PRSNRLGTSPQ) and 140–175 (SKRQSNTETVSGTSPSTPLGKSFLAQQDLSPNSSTI). Positions 185-202 (PNDRLSHDRESHSAERPR) are enriched in basic and acidic residues. Over residues 217–226 (STPSSPTNSY) the composition is skewed to polar residues. The segment covering 252-262 (ARDGDDRERRQ) has biased composition (basic and acidic residues). The Protein kinase domain occupies 281 to 801 (WVLGEELGVG…ITFIKTHPFF (521 aa)). Residues 291–293 (SYS) and Lys-319 each bind ATP. Disordered regions lie at residues 345–522 (LSDP…RSGA) and 534–597 (TLPP…KMSA). 2 stretches are compositionally biased toward polar residues: residues 378 to 397 (TASIGGQSSMASVSGGTVSN) and 408 to 433 (IVTTSSAASSPVLTASSGSTQLSPTA). Basic and acidic residues-rich tracts occupy residues 466–494 (GGEDGKDGQDGQETPSREWDRDRDWDNMT) and 502–521 (VREESAEGGEKEKDEEERSG). Residues 535 to 544 (LPPPQIPSTP) show a composition bias toward pro residues. Basic and acidic residues predominate over residues 555–569 (DGHRTSRETPRDRPH). Residues 621 to 623 (SLA) and Glu-627 each bind ATP. The Proton acceptor role is filled by Asp-666. ATP-binding residues include Glu-670 and Asp-684. Residues 850–859 (EDEDGFEYDA) show a composition bias toward acidic residues. Disordered regions lie at residues 850 to 871 (EDEDGFEYDADTVSPRPEGGAV), 907 to 955 (LGED…GGNR), 972 to 1035 (GGGM…SDEA), and 1116 to 1152 (EADGDPAGSDSGAGLSSSSHVESGGGGVGGGGRGGGH). Residues 927 to 942 (GKREKEVEKKKGEKAR) show a composition bias toward basic and acidic residues. 3 stretches are compositionally biased toward low complexity: residues 977–992 (GSATSVAASDTVRTPG), 1002–1030 (RPGSRAGIPSFGLGPGSGSRSNRGSGASM), and 1120–1137 (DPAGSDSGAGLSSSSHVE). Positions 1138–1152 (SGGGGVGGGGRGGGH) are enriched in gly residues.

This sequence belongs to the protein kinase superfamily. AGC Ser/Thr protein kinase family. PDPK1 subfamily.

It catalyses the reaction L-seryl-[protein] + ATP = O-phospho-L-seryl-[protein] + ADP + H(+). It carries out the reaction L-threonyl-[protein] + ATP = O-phospho-L-threonyl-[protein] + ADP + H(+). Serine/threonine-protein kinase that functions in the sphingolipid-mediated signaling pathway, regulating organization of the plasma membrane. May phosphorylate PKC1 to activate the cell integrity MAPK cascade during cell wall and membrane stress. May regulate sphingolipid metabolism upstream of YPK1. The polypeptide is Serine/threonine-protein kinase PDK1 (Cryptococcus neoformans var. grubii serotype A (strain H99 / ATCC 208821 / CBS 10515 / FGSC 9487) (Filobasidiella neoformans var. grubii)).